The following is a 478-amino-acid chain: F-box protein YDR306C (478 aa).

Basic residues predominate over residues 1 to 14; it reads MANKSRPKKIKAPY. Disordered stretches follow at residues 1-32 and 67-101; these read MANKSRPKKIKAPYRKYVAGEGFSSTRNDNKA and RLSNEKKDKKGRKQSPSSSSTSSSKGEKNGKVIES. The segment covering 80–90 has biased composition (low complexity); that stretch reads QSPSSSSTSSS. Over residues 91–101 the composition is skewed to basic and acidic residues; the sequence is KGEKNGKVIES. In terms of domain architecture, F-box spans 112–173; sequence KMVLPWEIQH…CLPKLYYAPA (62 aa).

As to quaternary structure, interacts with SKP1. Component of the probable SCF(YDR306C) complex containing CDC53, SKP1, RBX1 and YDR306C. Post-translationally, autoubiquitinated by the E3 ubiquitin ligase complex in conjunction with the E2 enzyme CDC34.

It participates in protein modification; protein ubiquitination. Substrate recognition component of a SCF (SKP1-CUL1-F-box protein) E3 ubiquitin-protein ligase complex which mediates the ubiquitination and subsequent proteasomal degradation of target proteins. Probably recognizes and binds to phosphorylated target proteins. This Saccharomyces cerevisiae (strain ATCC 204508 / S288c) (Baker's yeast) protein is F-box protein YDR306C.